Consider the following 591-residue polypeptide: Probable translation initiation factor IF-2 (591 aa).

In terms of domain architecture, tr-type G spans 7–223; sequence LRTPIVCVMG…LLGLAQKFLE (217 aa). The interval 16–23 is G1; it reads GHVDHGKT. GTP is bound at residue 16-23; the sequence is GHVDHGKT. Residues 41–45 form a G2 region; it reads AITQH. A G3 region spans residues 78-81; sequence DTPG. GTP contacts are provided by residues 78–82 and 132–135; these read DTPGH and NKID. The segment at 132–135 is G4; the sequence is NKID. Residues 200-202 are G5; that stretch reads SAM.

It belongs to the TRAFAC class translation factor GTPase superfamily. Classic translation factor GTPase family. IF-2 subfamily.

In terms of biological role, function in general translation initiation by promoting the binding of the formylmethionine-tRNA to ribosomes. Seems to function along with eIF-2. This Methanosarcina barkeri (strain Fusaro / DSM 804) protein is Probable translation initiation factor IF-2.